Reading from the N-terminus, the 556-residue chain is Zinc finger protein 18 (556 aa).

The SCAN box domain maps to 41–123 (RQLFRQFRYQ…TLVESLKGDP (83 aa)). The segment at 169 to 195 (QDLPLQNTSSAPGELLSHGVKEESDLE) is disordered. The KRAB domain occupies 218–291 (EVGTALLPSL…HLHSAEKMAR (74 aa)). C2H2-type zinc fingers lie at residues 415–437 (PTCRECGKTFYRNSQLVFHQRTH), 443–465 (FHCRICKKAFLRSSDFVKHQRTH), 471–493 (CKCDYCGKGFSDFSGLRHHEKIH), 499–521 (YKCPICEKSFIQRSNFNRHQRVH), and 527–549 (YKCTHCGKRFSWSSSLDKHQRSH).

Belongs to the krueppel C2H2-type zinc-finger protein family.

It localises to the nucleus. In terms of biological role, may be involved in transcriptional regulation. The chain is Zinc finger protein 18 (Znf18) from Rattus norvegicus (Rat).